Consider the following 205-residue polypeptide: Large ribosomal subunit protein uL10 (205 aa).

A disordered region spans residues Ala-167–Ala-205. 2 stretches are compositionally biased toward low complexity: residues Gly-169–Pro-180 and Pro-190–Ala-205.

This sequence belongs to the universal ribosomal protein uL10 family. As to quaternary structure, part of the ribosomal stalk of the 50S ribosomal subunit. The N-terminus interacts with L11 and the large rRNA to form the base of the stalk. The C-terminus forms an elongated spine to which L12 dimers bind in a sequential fashion forming a multimeric L10(L12)X complex.

Functionally, forms part of the ribosomal stalk, playing a central role in the interaction of the ribosome with GTP-bound translation factors. The sequence is that of Large ribosomal subunit protein uL10 from Treponema denticola (strain ATCC 35405 / DSM 14222 / CIP 103919 / JCM 8153 / KCTC 15104).